The primary structure comprises 279 residues: Large ribosomal subunit protein uL2 (279 aa).

Disordered regions lie at residues 1–28 and 221–279; these read MPARRYKPTSPGRRNSSVLTRDSVTKEK and RGTV…GRRR. Over residues 12–22 the composition is skewed to polar residues; it reads GRRNSSVLTRD.

This sequence belongs to the universal ribosomal protein uL2 family. As to quaternary structure, part of the 50S ribosomal subunit. Forms a bridge to the 30S subunit in the 70S ribosome.

Functionally, one of the primary rRNA binding proteins. Required for association of the 30S and 50S subunits to form the 70S ribosome, for tRNA binding and peptide bond formation. It has been suggested to have peptidyltransferase activity; this is somewhat controversial. Makes several contacts with the 16S rRNA in the 70S ribosome. This is Large ribosomal subunit protein uL2 from Rubrobacter xylanophilus (strain DSM 9941 / JCM 11954 / NBRC 16129 / PRD-1).